Reading from the N-terminus, the 615-residue chain is 1-deoxy-D-xylulose-5-phosphate synthase (615 aa).

Thiamine diphosphate is bound by residues His-72 and 113–115 (GHA). Asp-144 contacts Mg(2+). Thiamine diphosphate-binding positions include 145–146 (GA), Asn-173, Tyr-281, and Glu-360. Asn-173 is a binding site for Mg(2+).

It belongs to the transketolase family. DXPS subfamily. Homodimer. Requires Mg(2+) as cofactor. Thiamine diphosphate serves as cofactor.

It catalyses the reaction D-glyceraldehyde 3-phosphate + pyruvate + H(+) = 1-deoxy-D-xylulose 5-phosphate + CO2. The protein operates within metabolic intermediate biosynthesis; 1-deoxy-D-xylulose 5-phosphate biosynthesis; 1-deoxy-D-xylulose 5-phosphate from D-glyceraldehyde 3-phosphate and pyruvate: step 1/1. In terms of biological role, catalyzes the acyloin condensation reaction between C atoms 2 and 3 of pyruvate and glyceraldehyde 3-phosphate to yield 1-deoxy-D-xylulose-5-phosphate (DXP). The polypeptide is 1-deoxy-D-xylulose-5-phosphate synthase (Thermus thermophilus (strain ATCC BAA-163 / DSM 7039 / HB27)).